The primary structure comprises 63 residues: Large ribosomal subunit protein uL29 (63 aa).

It belongs to the universal ribosomal protein uL29 family.

This Caulobacter vibrioides (strain ATCC 19089 / CIP 103742 / CB 15) (Caulobacter crescentus) protein is Large ribosomal subunit protein uL29.